Reading from the N-terminus, the 535-residue chain is Triacylglyceride transporter MHAS_02168/C731_2106 (535 aa).

Topologically, residues 1 to 18 (MAFPQTPNRLIRPRRTSR) are cytoplasmic. The helical transmembrane segment at 19 to 39 (GIAISAGGLAVLLGALDTYVV) threads the bilayer. The Periplasmic portion of the chain corresponds to 40 to 60 (VSIVTDIMRDVGIAVNQIQRV). A helical transmembrane segment spans residues 61-82 (TPIITGYLLGYIAAMPLLGRAS). Residues 83–86 (DRFG) lie on the Cytoplasmic side of the membrane. A helical transmembrane segment spans residues 87-107 (RKLLIQISLAGFALGSVITAL). The Periplasmic portion of the chain corresponds to 108–111 (ATNL). The chain crosses the membrane as a helical span at residues 112–136 (DVLVAGRVIQGAASGALLPVTLALA). Residues 137–145 (ADLWATHKR) are Cytoplasmic-facing. The helical transmembrane segment at 146–167 (AAVLGGVGAAQELGAVLGPIYG) threads the bilayer. Residues 168-177 (IFVVWLFHHW) are Periplasmic-facing. Residues 178-198 (QAVFWVNVPLALIAMVLIHIS) traverse the membrane as a helical segment. Residues 199-212 (LPPRVRTEEPQRVD) are Cytoplasmic-facing. The helical transmembrane segment at 213–230 (VTGGLLLALALGLATIGL) threads the bilayer. Over 231–243 (YNAEPDGKQVLPE) the chain is Periplasmic. A helical transmembrane segment spans residues 244-263 (YGPPLIIGAVIAAVAFLVWE). Topologically, residues 264 to 278 (RFARTRLLDPAGVRF) are cytoplasmic. A helical membrane pass occupies residues 279–300 (RPFLIALLVSLVTGGALMVTLV). At 301 to 320 (NVELFGQGVLGLDQDEAVFL) the chain is on the periplasmic side. The next 2 helical transmembrane spans lie at 321–343 (LARFLIALPVGALLGGWIATRVG) and 344–364 (DRAVTAVGLLIAAGGFYLIAQ). Residues 365-384 (WPADVLESRHDLGFVSLPTL) are Periplasmic-facing. A beta-hairpin region spans residues 373–382 (RHDLGFVSLP). The helical transmembrane segment at 385-407 (DTDLAIAGFGLGLVIAPLTSAAL) threads the bilayer. Residues 408-415 (RVVPAAQH) lie on the Cytoplasmic side of the membrane. A helical membrane pass occupies residues 416–440 (GIASAAVVVARMIGMLIGIAALSAW). The Periplasmic portion of the chain corresponds to 441 to 487 (GLYRFNQYLKEQLAALPPAPADFPGGQMAGQMMRLRTATVQAYVLQY). A helical transmembrane segment spans residues 488 to 507 (GEIFAITAGLCVFGAVLGLF). Residues 508-535 (IAGRREHAEESADAVDGVSNARDRAPSA) are Cytoplasmic-facing.

It belongs to the major facilitator superfamily. P55 (TC 2.A.1.3.34) family.

The protein localises to the cell inner membrane. In association with lipoprotein LprG transports triacylglycerides (TAG) across the inner cell membrane, probably transfering them to lipoprotein LprG in the periplasm. TAG probably regulates lipid metabolism and growth regulation and plays a structural role in the outer membrane. Mutagenesis and molecular modeling suggests TAG (and maybe other lipids) enters the central cavity of the P55 transporter from within the cell inner membrane via clefts on the cytoplasmic face of P55 between TM5-TM8 and TM2-TM11. From there the lipid is probably transferred to the hydrophobic cavity of LprG. The lprG-MHAS_02167/C731_2107 operon complements the vancomycin sensitivity of an M.smegmatis knockout of the same operon. Probably required with LprG for normal surface localization of lipoarabinomannan (LAM). This Mycolicibacterium hassiacum (strain DSM 44199 / CIP 105218 / JCM 12690 / 3849) (Mycobacterium hassiacum) protein is Triacylglyceride transporter MHAS_02168/C731_2106.